A 195-amino-acid chain; its full sequence is Molybdopterin synthase catalytic subunit (195 aa).

The tract at residues 1–37 (MSARPEPQPGSERNATEPLPSHLDPTTYPRTLTTTHG) is disordered. Residues 25 to 37 (PTTYPRTLTTTHG) are compositionally biased toward low complexity. Residues 141–142 (HR), Lys157, and 164–166 (KRE) contribute to the substrate site.

Belongs to the MoaE family. MOCS2B subfamily. In terms of assembly, heterotetramer; composed of 2 small (MOCS2A) and 2 large (MOCS2B) subunits.

The protein localises to the cytoplasm. The enzyme catalyses 2 [molybdopterin-synthase sulfur-carrier protein]-C-terminal-Gly-aminoethanethioate + cyclic pyranopterin phosphate + H2O = molybdopterin + 2 [molybdopterin-synthase sulfur-carrier protein]-C-terminal Gly-Gly + 2 H(+). It participates in cofactor biosynthesis; molybdopterin biosynthesis. Its function is as follows. Catalytic subunit of the molybdopterin synthase complex, a complex that catalyzes the conversion of precursor Z into molybdopterin. Acts by mediating the incorporation of 2 sulfur atoms from thiocarboxylated MOCS2A into precursor Z to generate a dithiolene group. In Emericella nidulans (strain FGSC A4 / ATCC 38163 / CBS 112.46 / NRRL 194 / M139) (Aspergillus nidulans), this protein is Molybdopterin synthase catalytic subunit.